The primary structure comprises 276 residues: Undecaprenyl-diphosphatase (276 aa).

A run of 5 helical transmembrane segments spans residues 84–104 (YRLGWYVIIGTIPICILGLFF), 115–135 (LWVVVTALVVFSGVIALAEYV), 188–208 (FGFLLAIPAVFASGLFSLPDA), 222–242 (QLLVATLIAFVLGLTAVAWLL), and 250–270 (MYWFVGYRVLVGTGMLVLLAT).

The protein belongs to the UppP family.

Its subcellular location is the cell membrane. It catalyses the reaction di-trans,octa-cis-undecaprenyl diphosphate + H2O = di-trans,octa-cis-undecaprenyl phosphate + phosphate + H(+). Functionally, catalyzes the dephosphorylation of undecaprenyl diphosphate (UPP). Confers resistance to bacitracin. This is Undecaprenyl-diphosphatase from Mycobacterium tuberculosis (strain ATCC 25177 / H37Ra).